The chain runs to 492 residues: Glutamyl-tRNA(Gln) amidotransferase subunit A (492 aa).

Residues Lys-79 and Ser-154 each act as charge relay system in the active site. Ser-178 acts as the Acyl-ester intermediate in catalysis.

Belongs to the amidase family. GatA subfamily. In terms of assembly, heterotrimer of A, B and C subunits.

The catalysed reaction is L-glutamyl-tRNA(Gln) + L-glutamine + ATP + H2O = L-glutaminyl-tRNA(Gln) + L-glutamate + ADP + phosphate + H(+). Its function is as follows. Allows the formation of correctly charged Gln-tRNA(Gln) through the transamidation of misacylated Glu-tRNA(Gln) in organisms which lack glutaminyl-tRNA synthetase. The reaction takes place in the presence of glutamine and ATP through an activated gamma-phospho-Glu-tRNA(Gln). The sequence is that of Glutamyl-tRNA(Gln) amidotransferase subunit A from Acinetobacter baumannii (strain ATCC 17978 / DSM 105126 / CIP 53.77 / LMG 1025 / NCDC KC755 / 5377).